The following is a 353-amino-acid chain: tRNA N6-adenosine threonylcarbamoyltransferase (353 aa).

Fe cation is bound by residues H109 and H113. Residues 136-140 (TVSGG), D169, G182, D186, and N284 each bind substrate. D312 is a Fe cation binding site.

It belongs to the KAE1 / TsaD family. The cofactor is Fe(2+).

Its subcellular location is the cytoplasm. It carries out the reaction L-threonylcarbamoyladenylate + adenosine(37) in tRNA = N(6)-L-threonylcarbamoyladenosine(37) in tRNA + AMP + H(+). Required for the formation of a threonylcarbamoyl group on adenosine at position 37 (t(6)A37) in tRNAs that read codons beginning with adenine. Is involved in the transfer of the threonylcarbamoyl moiety of threonylcarbamoyl-AMP (TC-AMP) to the N6 group of A37, together with TsaE and TsaB. TsaD likely plays a direct catalytic role in this reaction. The protein is tRNA N6-adenosine threonylcarbamoyltransferase of Chlorobaculum tepidum (strain ATCC 49652 / DSM 12025 / NBRC 103806 / TLS) (Chlorobium tepidum).